The sequence spans 140 residues: Small ribosomal subunit protein uS12m (140 aa).

Belongs to the universal ribosomal protein uS12 family.

Its subcellular location is the mitochondrion. This Dictyostelium discoideum (Social amoeba) protein is Small ribosomal subunit protein uS12m (mrps12).